A 98-amino-acid chain; its full sequence is NADH-ubiquinone oxidoreductase chain 4L (98 aa).

The next 3 membrane-spanning stretches (helical) occupy residues 1–21, 29–49, and 61–81; these read MSLV…GLLM, ALLC…LTIL, and IILL…LVTI.

The protein belongs to the complex I subunit 4L family. Core subunit of respiratory chain NADH dehydrogenase (Complex I) which is composed of 45 different subunits.

It localises to the mitochondrion inner membrane. It catalyses the reaction a ubiquinone + NADH + 5 H(+)(in) = a ubiquinol + NAD(+) + 4 H(+)(out). In terms of biological role, core subunit of the mitochondrial membrane respiratory chain NADH dehydrogenase (Complex I) which catalyzes electron transfer from NADH through the respiratory chain, using ubiquinone as an electron acceptor. Part of the enzyme membrane arm which is embedded in the lipid bilayer and involved in proton translocation. This is NADH-ubiquinone oxidoreductase chain 4L (MT-ND4L) from Ziphius cavirostris (Cuvier's beaked whale).